The primary structure comprises 274 residues: Large ribosomal subunit protein uL2cz/uL2cy (274 aa).

Disordered regions lie at residues 1 to 22 (MAIH…DSQV) and 225 to 252 (PVDH…GYPA).

The protein belongs to the universal ribosomal protein uL2 family. Part of the 50S ribosomal subunit.

The protein resides in the plastid. It localises to the chloroplast. This is Large ribosomal subunit protein uL2cz/uL2cy (rpl2-A) from Barbarea verna (Land cress).